The primary structure comprises 37 residues: Large ribosomal subunit protein bL36 (37 aa).

It belongs to the bacterial ribosomal protein bL36 family.

The protein is Large ribosomal subunit protein bL36 of Leptospira interrogans serogroup Icterohaemorrhagiae serovar copenhageni (strain Fiocruz L1-130).